The primary structure comprises 249 residues: Exosome complex component Rrp41 (249 aa).

Belongs to the RNase PH family. Rrp41 subfamily. Component of the archaeal exosome complex. Forms a hexameric ring-like arrangement composed of 3 Rrp41-Rrp42 heterodimers. The hexameric ring associates with a trimer of Rrp4 and/or Csl4 subunits.

It is found in the cytoplasm. In terms of biological role, catalytic component of the exosome, which is a complex involved in RNA degradation. Has 3'-&gt;5' exoribonuclease activity. Can also synthesize heteromeric RNA-tails. The protein is Exosome complex component Rrp41 of Pyrococcus horikoshii (strain ATCC 700860 / DSM 12428 / JCM 9974 / NBRC 100139 / OT-3).